Reading from the N-terminus, the 588-residue chain is L-fucose isomerase (588 aa).

Residues E335 and D359 each act as proton acceptor in the active site. Mn(2+) contacts are provided by E335, D359, and H525.

This sequence belongs to the L-fucose isomerase family. The cofactor is Mn(2+).

The protein resides in the cytoplasm. It catalyses the reaction L-fucose = L-fuculose. Its pathway is carbohydrate degradation; L-fucose degradation; L-lactaldehyde and glycerone phosphate from L-fucose: step 1/3. In terms of biological role, converts the aldose L-fucose into the corresponding ketose L-fuculose. This Streptococcus pneumoniae (strain ATCC 700669 / Spain 23F-1) protein is L-fucose isomerase.